The following is a 93-amino-acid chain: Acylphosphatase (93 aa).

The 88-residue stretch at Arg6–Arg93 folds into the Acylphosphatase-like domain. Catalysis depends on residues Arg21 and Asn40.

It belongs to the acylphosphatase family.

The catalysed reaction is an acyl phosphate + H2O = a carboxylate + phosphate + H(+). The protein is Acylphosphatase (acyP) of Streptomyces coelicolor (strain ATCC BAA-471 / A3(2) / M145).